The sequence spans 84 residues: Cell division topological specificity factor (84 aa).

Belongs to the MinE family.

Prevents the cell division inhibition by proteins MinC and MinD at internal division sites while permitting inhibition at polar sites. This ensures cell division at the proper site by restricting the formation of a division septum at the midpoint of the long axis of the cell. In Cupriavidus pinatubonensis (strain JMP 134 / LMG 1197) (Cupriavidus necator (strain JMP 134)), this protein is Cell division topological specificity factor.